A 245-amino-acid polypeptide reads, in one-letter code: uncharacterized protein (245 aa).

The HTH gntR-type domain maps to 29–96 (RSLIEATFQR…AQRGFHVTPM (68 aa)). Residues 56-75 (IEDLKSRYEVSGGTVREALS) constitute a DNA-binding region (H-T-H motif).

This is an uncharacterized protein from Paraburkholderia xenovorans (strain LB400).